Here is a 278-residue protein sequence, read N- to C-terminus: Ras-related protein Rab-40B (278 aa).

Positions 23, 26, and 27 each coordinate GTP. Residues 41–49 (SPYGHPAGI) are switch-I. Position 69 (aspartate 69) interacts with Mg(2+). The GTP site is built by glycine 72, asparagine 126, and arginine 127. Residues 72 to 88 (GQGRFCTIFRSYSRGAQ) form a switch-II region. The SOCS box domain maps to 175–228 (LLRHGMDRLWRPSKVLSLQDLCCRAVVSCTPVHLVDKLPLPIALRSHLKSFSMA). The disordered stretch occupies residues 242–278 (SLTTSSTHKRSSLRKVKLVRPPQSPPKNCTRNSCKIS). Basic residues predominate over residues 248–259 (THKRSSLRKVKL). A compositionally biased stretch (polar residues) spans 267–278 (PKNCTRNSCKIS). The S-palmitoyl cysteine moiety is linked to residue cysteine 270. Cysteine 275 is lipidated: S-geranylgeranyl cysteine.

It belongs to the small GTPase superfamily. Rab family. In terms of assembly, component of the cullin-5-RING E3 ubiquitin-protein ligase complex (ECS(RAB40B) complex) composed of CUL5, Elongin BC (ELOB and ELOC), RNF7/RBX2 and RAB40B; RAB40B interaction with ECS complex is GTP-independent. Binds (GTP-bound) LIMA1; interaction promotes LIMA1 subcellular localization in lamellipodia during cell migration. Interacts (GTP-bound) with TKS5/SH3PXD2A (via PX domain); interaction promotes invadopodia-mediated extracellular matrix degradation. Requires Mg(2+) as cofactor.

The protein localises to the cell membrane. Its subcellular location is the cytoplasm. It is found in the cytosol. The protein resides in the cell projection. It localises to the lamellipodium membrane. The protein localises to the ruffle. The catalysed reaction is GTP + H2O = GDP + phosphate + H(+). The protein operates within protein modification; protein ubiquitination. Its activity is regulated as follows. Regulated by guanine nucleotide exchange factors (GEFs) which promote the exchange of bound GDP for free GTP. Regulated by GTPase activating proteins (GAPs) which increase the GTP hydrolysis activity. Inhibited by GDP dissociation inhibitors (GDIs). In terms of biological role, RAB40B small GTPase acts as substrate-recognition components of the ECS(RAB40B) E3 ubiquitin ligase complex which mediates the ubiquitination of target proteins. The Rab40 subfamily belongs to the Rab family that are key regulators of intracellular membrane trafficking, from the formation of transport vesicles to their fusion with membranes. Rabs cycle between an inactive GDP-bound form and an active GTP-bound form that is able to recruit to membranes different sets of downstream effectors directly responsible for vesicle formation, movement, tethering and fusion. As part of the ECS(RAB40B) complex, GTP-bound RAB40B promotes LIMA1/EPLIN ubiquitination and degradation, thereby regulating leading-edge actin dynamics during cell migration. As part of the ECS(RAB40B) complex, GTP-bound RAB40B also ubiquitinates RAP2A GTPase which promotes its localization to lamellipodia and activation to drive cell migration. The ECS(RAB40B) complex does not mediate canonical ubiquitin-dependent degradation of RAP2. RAB40B also binds TKS5/SH3PXD2A effector independently from ECS complex to promote invadopodia-mediated extracellular matrix degradation. This Homo sapiens (Human) protein is Ras-related protein Rab-40B.